The primary structure comprises 136 residues: Large ribosomal subunit protein uL16 (136 aa).

It belongs to the universal ribosomal protein uL16 family. As to quaternary structure, part of the 50S ribosomal subunit.

Functionally, binds 23S rRNA and is also seen to make contacts with the A and possibly P site tRNAs. The protein is Large ribosomal subunit protein uL16 of Edwardsiella ictaluri (strain 93-146).